The chain runs to 1299 residues: DNA-directed RNA polymerase subunit beta' (1299 aa).

Zn(2+)-binding residues include Cys-60, Cys-62, Cys-75, and Cys-78. Positions 535, 537, and 539 each coordinate Mg(2+). 4 residues coordinate Zn(2+): Cys-877, Cys-954, Cys-961, and Cys-964.

It belongs to the RNA polymerase beta' chain family. In terms of assembly, the RNAP catalytic core consists of 2 alpha, 1 beta, 1 beta' and 1 omega subunit. When a sigma factor is associated with the core the holoenzyme is formed, which can initiate transcription. Mg(2+) serves as cofactor. Requires Zn(2+) as cofactor.

It carries out the reaction RNA(n) + a ribonucleoside 5'-triphosphate = RNA(n+1) + diphosphate. In terms of biological role, DNA-dependent RNA polymerase catalyzes the transcription of DNA into RNA using the four ribonucleoside triphosphates as substrates. The protein is DNA-directed RNA polymerase subunit beta' of Renibacterium salmoninarum (strain ATCC 33209 / DSM 20767 / JCM 11484 / NBRC 15589 / NCIMB 2235).